A 606-amino-acid polypeptide reads, in one-letter code: Transmembrane 9 superfamily member 1 (606 aa).

The first 27 residues, 1–27 (MTVVGNPRSWSCRWLPILILLLGTGHG), serve as a signal peptide directing secretion. Asn-178 carries an N-linked (GlcNAc...) asparagine glycan. The next 4 helical transmembrane spans lie at 237 to 257 (LSII…AVIL), 310 to 330 (VLGV…MALL), 339 to 359 (GAIN…SGYV), and 373 to 393 (VWNI…TWSV). Residue Asn-401 is glycosylated (N-linked (GlcNAc...) asparagine). 4 helical membrane-spanning segments follow: residues 412 to 432 (ILLL…IGGI), 469 to 489 (VGGF…FATV), 499 to 519 (GILF…SIAL), and 535 to 555 (SVLS…FYYA). Asn-559 carries N-linked (GlcNAc...) asparagine glycosylation. The chain crosses the membrane as a helical span at residues 570-590 (FGYSLLTGYVFFLMLGTISFF).

This sequence belongs to the nonaspanin (TM9SF) (TC 9.A.2) family.

It is found in the lysosome membrane. The protein localises to the cytoplasmic vesicle. Its subcellular location is the autophagosome membrane. Plays an essential role in autophagy. This chain is Transmembrane 9 superfamily member 1 (TM9SF1), found in Pongo abelii (Sumatran orangutan).